Consider the following 532-residue polypeptide: Maternal protein exuperantia (532 aa).

Disordered stretches follow at residues 206–251 and 403–491; these read CSAS…NAVQ and TVKP…NGLK. Low complexity-rich tracts occupy residues 220–231 and 404–417; these read GSSMVSDSVSIS and VKPV…NNNN. Polar residues predominate over residues 454–467; that stretch reads SVSSLPDSTTKTPS. Ser-467 is subject to Phosphoserine.

In terms of assembly, component of the osk RNP complex, which is composed of at least exuperantia (exu), ypsilon schachtel (yps), aret (bruno), cup, and the mRNA of osk. In the sponge body, forms a ribonucleoprotein complex (RNP) containing at least me31B, exu, yps and the mRNA of osk; interactions with exu and yps are RNA dependent.

The protein localises to the cytoplasm. Its subcellular location is the cytoplasmic ribonucleoprotein granule. Functionally, ensures the proper localization of the mRNA of the bicoid gene to the anterior regions of the oocyte thus playing a fundamental role in the establishment of the polarity of the oocyte. May bind the bcd mRNA. This Drosophila melanogaster (Fruit fly) protein is Maternal protein exuperantia (exu).